We begin with the raw amino-acid sequence, 715 residues long: Fatty acid oxidation complex subunit alpha (715 aa).

Residues 1–190 (MIYEGKAITV…KVGAVDAVVA (190 aa)) are enoyl-CoA hydratase/isomerase. Aspartate 297 contacts substrate. The 3-hydroxyacyl-CoA dehydrogenase stretch occupies residues 312–715 (RDVKQAAVLG…MAKNGQSFFG (404 aa)). NAD(+) contacts are provided by residues methionine 325, aspartate 344, 401 to 403 (VVE), lysine 408, and serine 430. Histidine 451 (for 3-hydroxyacyl-CoA dehydrogenase activity) is an active-site residue. Asparagine 454 is a binding site for NAD(+). Substrate contacts are provided by asparagine 501 and tyrosine 660.

The protein in the N-terminal section; belongs to the enoyl-CoA hydratase/isomerase family. It in the C-terminal section; belongs to the 3-hydroxyacyl-CoA dehydrogenase family. In terms of assembly, heterotetramer of two alpha chains (FadB) and two beta chains (FadA).

It carries out the reaction a (3S)-3-hydroxyacyl-CoA + NAD(+) = a 3-oxoacyl-CoA + NADH + H(+). It catalyses the reaction a (3S)-3-hydroxyacyl-CoA = a (2E)-enoyl-CoA + H2O. The enzyme catalyses a 4-saturated-(3S)-3-hydroxyacyl-CoA = a (3E)-enoyl-CoA + H2O. The catalysed reaction is (3S)-3-hydroxybutanoyl-CoA = (3R)-3-hydroxybutanoyl-CoA. It carries out the reaction a (3Z)-enoyl-CoA = a 4-saturated (2E)-enoyl-CoA. It catalyses the reaction a (3E)-enoyl-CoA = a 4-saturated (2E)-enoyl-CoA. The protein operates within lipid metabolism; fatty acid beta-oxidation. In terms of biological role, involved in the aerobic and anaerobic degradation of long-chain fatty acids via beta-oxidation cycle. Catalyzes the formation of 3-oxoacyl-CoA from enoyl-CoA via L-3-hydroxyacyl-CoA. It can also use D-3-hydroxyacyl-CoA and cis-3-enoyl-CoA as substrate. The sequence is that of Fatty acid oxidation complex subunit alpha from Pseudomonas fluorescens (strain SBW25).